A 96-amino-acid chain; its full sequence is ATP synthase subunit c (96 aa).

A run of 2 helical transmembrane segments spans residues 24-44 and 75-95; these read HVGA…VGVG and AIAE…IFVA.

It belongs to the ATPase C chain family. As to quaternary structure, F-type ATPases have 2 components, F(1) - the catalytic core - and F(0) - the membrane proton channel. F(1) has five subunits: alpha(3), beta(3), gamma(1), delta(1), epsilon(1). F(0) has three main subunits: a(1), b(2) and c(10-14). The alpha and beta chains form an alternating ring which encloses part of the gamma chain. F(1) is attached to F(0) by a central stalk formed by the gamma and epsilon chains, while a peripheral stalk is formed by the delta and b chains.

It localises to the cell membrane. F(1)F(0) ATP synthase produces ATP from ADP in the presence of a proton or sodium gradient. F-type ATPases consist of two structural domains, F(1) containing the extramembraneous catalytic core and F(0) containing the membrane proton channel, linked together by a central stalk and a peripheral stalk. During catalysis, ATP synthesis in the catalytic domain of F(1) is coupled via a rotary mechanism of the central stalk subunits to proton translocation. Its function is as follows. Key component of the F(0) channel; it plays a direct role in translocation across the membrane. A homomeric c-ring of between 10-14 subunits forms the central stalk rotor element with the F(1) delta and epsilon subunits. In Mycoplasmoides gallisepticum (strain R(low / passage 15 / clone 2)) (Mycoplasma gallisepticum), this protein is ATP synthase subunit c.